The chain runs to 398 residues: Protein-glutamate methylesterase/protein-glutamine glutaminase (398 aa).

The region spanning 4–121 (KVLVVDDSSF…ATNKDDAILL (118 aa)) is the Response regulatory domain. Residue D55 is modified to 4-aspartylphosphate. Residues 133 to 200 (RMYRSSSLTP…SANPTTSSIS (68 aa)) are disordered. 2 stretches are compositionally biased toward polar residues: residues 136 to 146 (RSSSLTPTSTI) and 168 to 200 (RLAS…SSIS). A CheB-type methylesterase domain is found at 205–398 (SGKQYKLLLI…EAILKESSRG (194 aa)). Catalysis depends on residues S217, H244, and D340.

It belongs to the CheB family. Post-translationally, phosphorylated by CheA. Phosphorylation of the N-terminal regulatory domain activates the methylesterase activity.

Its subcellular location is the cytoplasm. It carries out the reaction [protein]-L-glutamate 5-O-methyl ester + H2O = L-glutamyl-[protein] + methanol + H(+). The enzyme catalyses L-glutaminyl-[protein] + H2O = L-glutamyl-[protein] + NH4(+). In terms of biological role, involved in chemotaxis. Part of a chemotaxis signal transduction system that modulates chemotaxis in response to various stimuli. Catalyzes the demethylation of specific methylglutamate residues introduced into the chemoreceptors (methyl-accepting chemotaxis proteins or MCP) by CheR. Also mediates the irreversible deamidation of specific glutamine residues to glutamic acid. The protein is Protein-glutamate methylesterase/protein-glutamine glutaminase of Shewanella frigidimarina (strain NCIMB 400).